An 857-amino-acid polypeptide reads, in one-letter code: Protein sip-5 (857 aa).

6 disordered regions span residues 1–81, 157–231, 384–416, 466–517, 545–747, and 763–857; these read MGNA…ARRL, GLPI…FKPT, SESSVNSGSLSPGVASPGGRRRNQSLSANAPNV, FGRR…GNRR, KAEK…PMFN, and HAGK…QVTL. 2 stretches are compositionally biased toward basic and acidic residues: residues 7–16 and 36–48; these read KESRGDDSGR and ESSRRNRNTRHDL. A compositionally biased stretch (low complexity) spans 49–61; it reads TGLLGRAAGGSSS. Residues 62–81 show a composition bias toward basic and acidic residues; it reads HADERHERKETKQEREARRL. Composition is skewed to polar residues over residues 179 to 191 and 199 to 208; these read ASPTDASSNTNHL and SLSTASEHST. 3 stretches are compositionally biased toward low complexity: residues 209-230, 384-394, and 476-504; these read SNAGSALPSPGSGKGSSSPFKP, SESSVNSGSLS, and SASATPGNGDENRGTGPATPANAGATANT. Basic and acidic residues predominate over residues 545–572; the sequence is KAEKEEQKEAKKREKEREKAEKKAEKAA. Low complexity-rich tracts occupy residues 586-604 and 621-645; these read SRSGHSSASGSSLSLPGLS and ASVASAMASTGAAMTTPAAPGALAP. Residues 648 to 657 show a composition bias toward basic and acidic residues; that stretch reads STKDKGKAVD. Residues 688–697 show a composition bias toward low complexity; it reads SSASSASSSA. Over residues 698–712 the composition is skewed to polar residues; that stretch reads VESNQGSYVPPSNLQ. Basic and acidic residues predominate over residues 783-799; the sequence is ETAKSGEGAGEHVEHVL. Polar residues-rich tracts occupy residues 800 to 838 and 845 to 857; these read DSQTTGISEQDSEINSQPPRLTVTLDSPATSVGDVSTAS and NETTVEHATQVTL.

It belongs to the SIP5 family.

The protein resides in the cytoplasm. Functionally, may negatively regulate the snf-1 kinase. In Neurospora crassa (strain ATCC 24698 / 74-OR23-1A / CBS 708.71 / DSM 1257 / FGSC 987), this protein is Protein sip-5 (sip-5).